A 304-amino-acid polypeptide reads, in one-letter code: Acetyl-coenzyme A carboxylase carboxyl transferase subunit beta (304 aa).

Residues 29–298 (LWTKCVSCAA…QAYRPSPQAS (270 aa)) enclose the CoA carboxyltransferase N-terminal domain. The Zn(2+) site is built by Cys33, Cys36, Cys52, and Cys55. The C4-type zinc finger occupies 33-55 (CVSCAALHYTKDFQLNLCVCPAC).

The protein belongs to the AccD/PCCB family. Acetyl-CoA carboxylase is a heterohexamer composed of biotin carboxyl carrier protein (AccB), biotin carboxylase (AccC) and two subunits each of ACCase subunit alpha (AccA) and ACCase subunit beta (AccD). The cofactor is Zn(2+).

It localises to the cytoplasm. The catalysed reaction is N(6)-carboxybiotinyl-L-lysyl-[protein] + acetyl-CoA = N(6)-biotinyl-L-lysyl-[protein] + malonyl-CoA. Its pathway is lipid metabolism; malonyl-CoA biosynthesis; malonyl-CoA from acetyl-CoA: step 1/1. Functionally, component of the acetyl coenzyme A carboxylase (ACC) complex. Biotin carboxylase (BC) catalyzes the carboxylation of biotin on its carrier protein (BCCP) and then the CO(2) group is transferred by the transcarboxylase to acetyl-CoA to form malonyl-CoA. This Gloeobacter violaceus (strain ATCC 29082 / PCC 7421) protein is Acetyl-coenzyme A carboxylase carboxyl transferase subunit beta.